The chain runs to 1133 residues: Guanine nucleotide-binding protein G(s) subunit alpha isoforms XLas (1133 aa).

Disordered stretches follow at residues 1–195 (MGMF…PEAL), 322–552 (DDTA…VPGA), 611–648 (SASA…WPDK), and 724–744 (RSRS…RKQM). The segment covering 31 to 48 (LEAPGAAAPGAGAGPAEE) has biased composition (low complexity). Residues 347 to 362 (DKSECAERPPVEREAA) are compositionally biased toward basic and acidic residues. 5 stretches are compositionally biased toward low complexity: residues 391–404 (PEAM…AAQA), 459–471 (GGAA…TPAE), 482–498 (AEPA…ESAS), 515–525 (ATLAEPAARAA), and 535–552 (RAVP…VPGA). Over residues 633–643 (PPTPRPPPRPT) the composition is skewed to pro residues. Residues 732 to 744 (KAKDPMEERRKQM) show a composition bias toward basic and acidic residues. Positions 737–761 (MEERRKQMRKEAIEMREQKRADKKR) form a coiled coil. Residues 778–1133 (CTHRLLLLGA…RMHLRQYELL (356 aa)) form the G-alpha domain. Residues 781–794 (RLLLLGAGESGKST) are G1 motif. Position 786-794 (786-794 (GAGESGKST)) interacts with GTP. Ser-793 provides a ligand contact to Mg(2+). The disordered stretch occupies residues 807 to 828 (FNGEGGEEDPQAARSNSDGEKA). Residues 935-943 (DLLRCRVLT) are G2 motif. Residues 936-943 (LLRCRVLT), 962-966 (DVGGQ), and 1031-1034 (NKQD) contribute to the GTP site. Arg-940 carries the post-translational modification ADP-ribosylarginine; by cholera toxin. Residue Thr-943 coordinates Mg(2+). The segment at 958–967 (FHMFDVGGQR) is G3 motif. The interval 1027–1034 (ILFLNKQD) is G4 motif. At Ser-1091 the chain carries Phosphoserine. A G5 motif region spans residues 1103–1108 (TCAVDT). Ala-1105 is a binding site for GTP.

Belongs to the G-alpha family. G(s) subfamily. In terms of assembly, g proteins are composed of 3 units; alpha, beta and gamma. The alpha chain contains the guanine nucleotide binding site. Interacts through its N-terminal region with ALEX which is produced from the same locus in a different open reading frame. This interaction may inhibit its adenylyl cyclase-stimulating activity. Interacts with MAGED2.

The protein resides in the cell membrane. Its subcellular location is the apical cell membrane. The enzyme catalyses GTP + H2O = GDP + phosphate + H(+). Guanine nucleotide-binding proteins (G proteins) function as transducers in numerous signaling pathways controlled by G protein-coupled receptors (GPCRs). The alpha chain contains the guanine nucleotide binding site and alternates between an active, GTP-bound state and an inactive, GDP-bound state. Signaling by an activated GPCR promotes GDP release and GTP binding. The alpha subunit has a low GTPase activity that converts bound GTP to GDP, thereby terminating the signal. Both GDP release and GTP hydrolysis are modulated by numerous regulatory proteins. Signaling involves the activation of adenylyl cyclases, resulting in increased levels of the signaling molecule cAMP. GNAS functions downstream of several GPCRs, including beta-adrenergic receptors. XLas isoforms interact with the same set of receptors as Gnas isoforms. In Mus musculus (Mouse), this protein is Guanine nucleotide-binding protein G(s) subunit alpha isoforms XLas.